The chain runs to 326 residues: Phosphate acyltransferase (326 aa).

This sequence belongs to the PlsX family. In terms of assembly, homodimer. Probably interacts with PlsY.

The protein resides in the cytoplasm. The enzyme catalyses a fatty acyl-[ACP] + phosphate = an acyl phosphate + holo-[ACP]. The protein operates within lipid metabolism; phospholipid metabolism. In terms of biological role, catalyzes the reversible formation of acyl-phosphate (acyl-PO(4)) from acyl-[acyl-carrier-protein] (acyl-ACP). This enzyme utilizes acyl-ACP as fatty acyl donor, but not acyl-CoA. The polypeptide is Phosphate acyltransferase (Thermus thermophilus (strain ATCC BAA-163 / DSM 7039 / HB27)).